The chain runs to 228 residues: Octanoyltransferase (228 aa).

Residues 31–212 (GETDGILILL…KFSEVFGIHF (182 aa)) form the BPL/LPL catalytic domain. Substrate contacts are provided by residues 76–83 (RGGKITFH), 143–145 (AIG), and 156–158 (GIA). The active-site Acyl-thioester intermediate is Cys-174.

Belongs to the LipB family.

The protein localises to the cytoplasm. It catalyses the reaction octanoyl-[ACP] + L-lysyl-[protein] = N(6)-octanoyl-L-lysyl-[protein] + holo-[ACP] + H(+). The protein operates within protein modification; protein lipoylation via endogenous pathway; protein N(6)-(lipoyl)lysine from octanoyl-[acyl-carrier-protein]: step 1/2. Catalyzes the transfer of endogenously produced octanoic acid from octanoyl-acyl-carrier-protein onto the lipoyl domains of lipoate-dependent enzymes. Lipoyl-ACP can also act as a substrate although octanoyl-ACP is likely to be the physiological substrate. This Thermoanaerobacter pseudethanolicus (strain ATCC 33223 / 39E) (Clostridium thermohydrosulfuricum) protein is Octanoyltransferase.